A 404-amino-acid polypeptide reads, in one-letter code: Nuclear receptor subfamily 2 group F member 6 (404 aa).

Residues 1–15 are compositionally biased toward gly residues; the sequence is MAMVTGGWGGPGGDT. Positions 1 to 49 are disordered; sequence MAMVTGGWGGPGGDTNGVDKAGGYPRAAEDDSASPPGAASDAEPGDEER. Positions 33-42 are enriched in low complexity; that stretch reads ASPPGAASDA. 2 positions are modified to phosphoserine: S34 and S40. Residues 53 to 128 constitute a DNA-binding region (nuclear receptor); it reads QVDCVVCGDK…VGMRKEAVQR (76 aa). The segment at 56 to 76 adopts an NR C4-type zinc-finger fold; the sequence is CVVCGDKSSGKHYGVFTCEGC. S83 is modified (phosphoserine). Residues 92 to 116 form an NR C4-type zinc finger; the sequence is CRSNRDCQIDQHHRNQCQYCRLKKC. An NR LBD domain is found at 165-393; that stretch reads PVSELIAQLL…TLIRDMLLSG (229 aa). The important for dimerization stretch occupies residues 327–404; that stretch reads LQEKAQVALT…TFNWPYGSGQ (78 aa).

This sequence belongs to the nuclear hormone receptor family. NR2 subfamily. Binds DNA as dimer; homodimer and heterodimer with NR2F2 and probably NR2F1. Interacts with THRB. As to expression, expressed in heart, placenta, liver, skeletal muscle, kidney and pancreas.

It is found in the nucleus. Functionally, transcription factor predominantly involved in transcriptional repression. Binds to promoter/enhancer response elements that contain the imperfect 5'-AGGTCA-3' direct or inverted repeats with various spacings which are also recognized by other nuclear hormone receptors. Involved in modulation of hormonal responses. Represses transcriptional activity of the lutropin-choriogonadotropic hormone receptor/LHCGR gene, the renin/REN gene and the oxytocin-neurophysin/OXT gene. Represses the triiodothyronine-dependent and -independent transcriptional activity of the thyroid hormone receptor gene in a cell type-specific manner. The corepressing function towards thyroid hormone receptor beta/THRB involves at least in part the inhibition of THRB binding to triiodothyronine response elements (TREs) by NR2F6. Inhibits NFATC transcription factor DNA binding and subsequently its transcriptional activity. Acts as transcriptional repressor of IL-17 expression in Th-17 differentiated CD4(+) T cells and may be involved in induction and/or maintenance of peripheral immunological tolerance and autoimmunity. Involved in development of forebrain circadian clock; is required early in the development of the locus coeruleus (LC). The polypeptide is Nuclear receptor subfamily 2 group F member 6 (NR2F6) (Homo sapiens (Human)).